We begin with the raw amino-acid sequence, 244 residues long: Phosphoadenosine 5'-phosphosulfate reductase (244 aa).

Cys239 functions as the Nucleophile; cysteine thiosulfonate intermediate in the catalytic mechanism.

This sequence belongs to the PAPS reductase family. CysH subfamily.

The protein resides in the cytoplasm. It catalyses the reaction [thioredoxin]-disulfide + sulfite + adenosine 3',5'-bisphosphate + 2 H(+) = [thioredoxin]-dithiol + 3'-phosphoadenylyl sulfate. It functions in the pathway sulfur metabolism; hydrogen sulfide biosynthesis; sulfite from sulfate: step 3/3. Functionally, catalyzes the formation of sulfite from phosphoadenosine 5'-phosphosulfate (PAPS) using thioredoxin as an electron donor. In Citrobacter koseri (strain ATCC BAA-895 / CDC 4225-83 / SGSC4696), this protein is Phosphoadenosine 5'-phosphosulfate reductase.